The following is a 198-amino-acid chain: Holliday junction branch migration complex subunit RuvA (198 aa).

A domain I region spans residues 1–63 (MYDYIKGQLT…EDAQLLFGFH (63 aa)). The segment at 64-142 (SEEEKDVFLK…EAPKEESSKP (79 aa)) is domain II. A flexible linker region spans residues 143 to 147 (PKAKQ). The interval 148–198 (QGNEQLDEAVEALLALGYKATELKKIRAFFEGTSETAEQYIKSALKMLMKG) is domain III.

Belongs to the RuvA family. Homotetramer. Forms an RuvA(8)-RuvB(12)-Holliday junction (HJ) complex. HJ DNA is sandwiched between 2 RuvA tetramers; dsDNA enters through RuvA and exits via RuvB. An RuvB hexamer assembles on each DNA strand where it exits the tetramer. Each RuvB hexamer is contacted by two RuvA subunits (via domain III) on 2 adjacent RuvB subunits; this complex drives branch migration. In the full resolvosome a probable DNA-RuvA(4)-RuvB(12)-RuvC(2) complex forms which resolves the HJ.

The protein resides in the cytoplasm. The RuvA-RuvB-RuvC complex processes Holliday junction (HJ) DNA during genetic recombination and DNA repair, while the RuvA-RuvB complex plays an important role in the rescue of blocked DNA replication forks via replication fork reversal (RFR). RuvA specifically binds to HJ cruciform DNA, conferring on it an open structure. The RuvB hexamer acts as an ATP-dependent pump, pulling dsDNA into and through the RuvAB complex. HJ branch migration allows RuvC to scan DNA until it finds its consensus sequence, where it cleaves and resolves the cruciform DNA. This Streptococcus equi subsp. zooepidemicus (strain H70) protein is Holliday junction branch migration complex subunit RuvA.